A 154-amino-acid chain; its full sequence is Ribosome maturation factor RimP (154 aa).

It belongs to the RimP family.

Its subcellular location is the cytoplasm. Functionally, required for maturation of 30S ribosomal subunits. This Desulforudis audaxviator (strain MP104C) protein is Ribosome maturation factor RimP.